The chain runs to 370 residues: UDP-N-acetylglucosamine--N-acetylmuramyl-(pentapeptide) pyrophosphoryl-undecaprenol N-acetylglucosamine transferase (370 aa).

Residues 10-12 (TGG), Asn-126, Ser-200, Ile-255, and Gln-300 contribute to the UDP-N-acetyl-alpha-D-glucosamine site.

The protein belongs to the glycosyltransferase 28 family. MurG subfamily.

The protein resides in the cell membrane. It catalyses the reaction Mur2Ac(oyl-L-Ala-gamma-D-Glu-L-Lys-D-Ala-D-Ala)-di-trans,octa-cis-undecaprenyl diphosphate + UDP-N-acetyl-alpha-D-glucosamine = beta-D-GlcNAc-(1-&gt;4)-Mur2Ac(oyl-L-Ala-gamma-D-Glu-L-Lys-D-Ala-D-Ala)-di-trans,octa-cis-undecaprenyl diphosphate + UDP + H(+). It functions in the pathway cell wall biogenesis; peptidoglycan biosynthesis. Its function is as follows. Cell wall formation. Catalyzes the transfer of a GlcNAc subunit on undecaprenyl-pyrophosphoryl-MurNAc-pentapeptide (lipid intermediate I) to form undecaprenyl-pyrophosphoryl-MurNAc-(pentapeptide)GlcNAc (lipid intermediate II). The protein is UDP-N-acetylglucosamine--N-acetylmuramyl-(pentapeptide) pyrophosphoryl-undecaprenol N-acetylglucosamine transferase of Lactobacillus delbrueckii subsp. bulgaricus (strain ATCC 11842 / DSM 20081 / BCRC 10696 / JCM 1002 / NBRC 13953 / NCIMB 11778 / NCTC 12712 / WDCM 00102 / Lb 14).